Reading from the N-terminus, the 163-residue chain is Nucleotide-binding protein CJJ81176_0398 (163 aa).

The protein belongs to the YajQ family.

In terms of biological role, nucleotide-binding protein. The sequence is that of Nucleotide-binding protein CJJ81176_0398 from Campylobacter jejuni subsp. jejuni serotype O:23/36 (strain 81-176).